A 404-amino-acid polypeptide reads, in one-letter code: 8-amino-7-oxononanoate synthase (404 aa).

Arg20 serves as a coordination point for substrate. 116–117 contacts pyridoxal 5'-phosphate; it reads GY. His141 is a binding site for substrate. 3 residues coordinate pyridoxal 5'-phosphate: Ser187, His215, and Thr243. The residue at position 246 (Lys246) is an N6-(pyridoxal phosphate)lysine. Thr366 contributes to the substrate binding site.

This sequence belongs to the class-II pyridoxal-phosphate-dependent aminotransferase family. BioF subfamily. In terms of assembly, homodimer. The cofactor is pyridoxal 5'-phosphate.

The enzyme catalyses 6-carboxyhexanoyl-[ACP] + L-alanine + H(+) = (8S)-8-amino-7-oxononanoate + holo-[ACP] + CO2. It functions in the pathway cofactor biosynthesis; biotin biosynthesis. In terms of biological role, catalyzes the decarboxylative condensation of pimeloyl-[acyl-carrier protein] and L-alanine to produce 8-amino-7-oxononanoate (AON), [acyl-carrier protein], and carbon dioxide. This chain is 8-amino-7-oxononanoate synthase, found in Cupriavidus necator (strain ATCC 17699 / DSM 428 / KCTC 22496 / NCIMB 10442 / H16 / Stanier 337) (Ralstonia eutropha).